A 645-amino-acid chain; its full sequence is Sentrin-specific protease 1 (645 aa).

Residues 1–200 are interaction with CCAR2; that stretch reads MDDIADRMRM…REIYRQLLQM (200 aa). Residues Ser57, Ser117, and Ser157 each carry the phosphoserine modification. A disordered region spans residues 92 to 117; sequence QSANGQWRNSTPSSSSSLQKSRNSRS. Low complexity predominate over residues 99-117; the sequence is RNSTPSSSSSLQKSRNSRS. Positions 171–177 match the Nuclear localization signal motif; sequence PKKTQRR. Residues 285–313 form a disordered region; it reads KDSGTLHHPHHHHSVPHQPDNLAASNTQS. 2 protease regions span residues 451–614 and 451–615; these read LTIT…YADC and LTIT…ADCI. Catalysis depends on residues His534 and Asp551. The Nuclear localization signal signature appears at 575–578; sequence KKRK. Cys604 acts as the Nucleophile in catalysis. The Nuclear localization signal signature appears at 629 to 635; it reads PYFRKRM. A Nuclear export signal motif is present at residues 636–645; that stretch reads VWEILHRKLL.

Belongs to the peptidase C48 family. Interacts with RBM33; promoting ALKBH5 desumoylation and subsequent activation.

It is found in the nucleus. Its subcellular location is the cytoplasm. Functionally, protease that catalyzes two essential functions in the SUMO pathway. The first is the hydrolysis of an alpha-linked peptide bond at the C-terminal end of the small ubiquitin-like modifier (SUMO) propeptides, SUMO1, SUMO2 and SUMO3 leading to the mature form of the proteins. The second is the deconjugation of SUMO1, SUMO2 and SUMO3 from targeted proteins, by cleaving an epsilon-linked peptide bond between the C-terminal glycine of the mature SUMO and the lysine epsilon-amino group of the target protein. Deconjugates SUMO1 from HIPK2. Deconjugates SUMO1 from HDAC1 and BHLHE40/DEC1, which decreases its transcriptional repression activity. Deconjugates SUMO1 from CLOCK, which decreases its transcriptional activation activity. Deconjugates SUMO2 from MTA1. Inhibits N(6)-methyladenosine (m6A) RNA methylation by mediating SUMO1 deconjugation from METTL3 and ALKBH5: METTL3 inhibits the m6A RNA methyltransferase activity, while ALKBH5 desumoylation promotes m6A demethylation. Desumoylates CCAR2 which decreases its interaction with SIRT1. Deconjugates SUMO1 from GPS2. This chain is Sentrin-specific protease 1 (SENP1), found in Pongo abelii (Sumatran orangutan).